Consider the following 393-residue polypeptide: Chorismate synthase (393 aa).

NADP(+) contacts are provided by Arg-48 and Arg-54. FMN is bound by residues 125-127 (RSS), 238-239 (NA), Gly-278, 293-297 (KPTSS), and Arg-319. The tract at residues 355–393 (ACTTPKIPGHTGPREGQEEGPSDSEPKVEFADDPEPDEA) is disordered.

The protein belongs to the chorismate synthase family. In terms of assembly, homotetramer. The cofactor is FMNH2.

It carries out the reaction 5-O-(1-carboxyvinyl)-3-phosphoshikimate = chorismate + phosphate. It functions in the pathway metabolic intermediate biosynthesis; chorismate biosynthesis; chorismate from D-erythrose 4-phosphate and phosphoenolpyruvate: step 7/7. Its function is as follows. Catalyzes the anti-1,4-elimination of the C-3 phosphate and the C-6 proR hydrogen from 5-enolpyruvylshikimate-3-phosphate (EPSP) to yield chorismate, which is the branch point compound that serves as the starting substrate for the three terminal pathways of aromatic amino acid biosynthesis. This reaction introduces a second double bond into the aromatic ring system. This is Chorismate synthase from Nitrosospira multiformis (strain ATCC 25196 / NCIMB 11849 / C 71).